The following is a 255-amino-acid chain: Imidazole glycerol phosphate synthase subunit HisF (255 aa).

Residues Asp11 and Asp130 contribute to the active site.

The protein belongs to the HisA/HisF family. In terms of assembly, heterodimer of HisH and HisF.

It localises to the cytoplasm. It catalyses the reaction 5-[(5-phospho-1-deoxy-D-ribulos-1-ylimino)methylamino]-1-(5-phospho-beta-D-ribosyl)imidazole-4-carboxamide + L-glutamine = D-erythro-1-(imidazol-4-yl)glycerol 3-phosphate + 5-amino-1-(5-phospho-beta-D-ribosyl)imidazole-4-carboxamide + L-glutamate + H(+). It participates in amino-acid biosynthesis; L-histidine biosynthesis; L-histidine from 5-phospho-alpha-D-ribose 1-diphosphate: step 5/9. In terms of biological role, IGPS catalyzes the conversion of PRFAR and glutamine to IGP, AICAR and glutamate. The HisF subunit catalyzes the cyclization activity that produces IGP and AICAR from PRFAR using the ammonia provided by the HisH subunit. This is Imidazole glycerol phosphate synthase subunit HisF from Campylobacter lari (strain RM2100 / D67 / ATCC BAA-1060).